Reading from the N-terminus, the 112-residue chain is Hydrogenase maturation factor HypA (112 aa).

Position 2 (His-2) interacts with Ni(2+). Zn(2+) is bound by residues Cys-73, Cys-76, Cys-88, and Cys-91.

The protein belongs to the HypA/HybF family.

Its function is as follows. Involved in the maturation of [NiFe] hydrogenases. Required for nickel insertion into the metal center of the hydrogenase. The polypeptide is Hydrogenase maturation factor HypA (Synechococcus elongatus (strain ATCC 33912 / PCC 7942 / FACHB-805) (Anacystis nidulans R2)).